The primary structure comprises 371 residues: Queuine tRNA-ribosyltransferase (371 aa).

The active-site Proton acceptor is Asp-89. Substrate contacts are provided by residues 89–93, Asp-143, Gln-185, and Gly-212; that span reads DSGGF. An RNA binding region spans residues 243-249; the sequence is GVGKPED. Asp-262 serves as the catalytic Nucleophile. The interval 267–271 is RNA binding; important for wobble base 34 recognition; that stretch reads TRNAR. Cys-300, Cys-302, Cys-305, and His-331 together coordinate Zn(2+).

Belongs to the queuine tRNA-ribosyltransferase family. Homodimer. Within each dimer, one monomer is responsible for RNA recognition and catalysis, while the other monomer binds to the replacement base PreQ1. Requires Zn(2+) as cofactor.

The enzyme catalyses 7-aminomethyl-7-carbaguanine + guanosine(34) in tRNA = 7-aminomethyl-7-carbaguanosine(34) in tRNA + guanine. It participates in tRNA modification; tRNA-queuosine biosynthesis. Catalyzes the base-exchange of a guanine (G) residue with the queuine precursor 7-aminomethyl-7-deazaguanine (PreQ1) at position 34 (anticodon wobble position) in tRNAs with GU(N) anticodons (tRNA-Asp, -Asn, -His and -Tyr). Catalysis occurs through a double-displacement mechanism. The nucleophile active site attacks the C1' of nucleotide 34 to detach the guanine base from the RNA, forming a covalent enzyme-RNA intermediate. The proton acceptor active site deprotonates the incoming PreQ1, allowing a nucleophilic attack on the C1' of the ribose to form the product. After dissociation, two additional enzymatic reactions on the tRNA convert PreQ1 to queuine (Q), resulting in the hypermodified nucleoside queuosine (7-(((4,5-cis-dihydroxy-2-cyclopenten-1-yl)amino)methyl)-7-deazaguanosine). The sequence is that of Queuine tRNA-ribosyltransferase from Azotobacter vinelandii (strain DJ / ATCC BAA-1303).